Here is a 322-residue protein sequence, read N- to C-terminus: Putative membrane-bound redox modulator Alx (322 aa).

Over 1–6 (MNTVGT) the chain is Periplasmic. Residues 7 to 27 (PLLWGGFAVVVVIMLSIDLLL) traverse the membrane as a helical segment. The Cytoplasmic portion of the chain corresponds to 28–43 (QGRRGAHAMSMKQAAG). Residues 44–64 (WSILWVTLSLLFNAAFWWYLA) form a helical membrane-spanning segment. Topologically, residues 65–89 (ETQGREVADPQALAFLTGYLIEKSL) are periplasmic. A helical transmembrane segment spans residues 90–110 (AVDNVFVWLMLFSYFSVPPAL). Residues 111–113 (QRR) are Cytoplasmic-facing. A helical membrane pass occupies residues 114–134 (VLVYGVLGAIVLRTIMIFAGT). A topological domain (periplasmic) is located at residue Trp-135. Residues 136 to 156 (LITQFEWLLYVFGAFLLFTGV) form a helical membrane-spanning segment. Topologically, residues 157–198 (KMALAKEDESGIGEKPMVRWLRGHLRMTDTIENEHFFVRKNG) are cytoplasmic. A helical transmembrane segment spans residues 199-219 (LLYATPLLLVLIMVEFSDVIF). The Periplasmic portion of the chain corresponds to 220–225 (AVDSIP). The helical transmembrane segment at 226-246 (AIFAVTTDPFIVLTSNLFAIL) threads the bilayer. Residues 247-261 (GLRAMYFLLSGVAER) are Cytoplasmic-facing. Residues 262-282 (FSMLKYGLAVILVFIGIKMLI) form a helical membrane-spanning segment. Over 283 to 286 (VDFY) the chain is Periplasmic. A helical transmembrane segment spans residues 287–307 (HIPIAISLGVVFGILTITLVI). Over 308-321 (NTWVNHQRDKKLRA) the chain is Cytoplasmic.

This sequence belongs to the TerC family.

It localises to the cell inner membrane. Has been proposed to be a redox modulator. This is Putative membrane-bound redox modulator Alx (alx) from Salmonella typhi.